Consider the following 354-residue polypeptide: Uroporphyrinogen decarboxylase (354 aa).

Substrate is bound by residues 25–29 (RQAGR), Phe-44, Asp-75, Tyr-152, Thr-207, and His-330.

Belongs to the uroporphyrinogen decarboxylase family. In terms of assembly, homodimer.

Its subcellular location is the cytoplasm. The enzyme catalyses uroporphyrinogen III + 4 H(+) = coproporphyrinogen III + 4 CO2. Its pathway is porphyrin-containing compound metabolism; protoporphyrin-IX biosynthesis; coproporphyrinogen-III from 5-aminolevulinate: step 4/4. In terms of biological role, catalyzes the decarboxylation of four acetate groups of uroporphyrinogen-III to yield coproporphyrinogen-III. This Xanthomonas axonopodis pv. citri (strain 306) protein is Uroporphyrinogen decarboxylase.